The sequence spans 101 residues: Small ribosomal subunit protein uS14 (101 aa).

This sequence belongs to the universal ribosomal protein uS14 family. In terms of assembly, part of the 30S ribosomal subunit. Contacts proteins S3 and S10.

Binds 16S rRNA, required for the assembly of 30S particles and may also be responsible for determining the conformation of the 16S rRNA at the A site. The sequence is that of Small ribosomal subunit protein uS14 from Actinobacillus pleuropneumoniae serotype 5b (strain L20).